Here is a 252-residue protein sequence, read N- to C-terminus: Chitooligosaccharide deacetylase (252 aa).

The Mg(2+) site is built by histidine 61 and histidine 125.

This sequence belongs to the YdjC deacetylase family. ChbG subfamily. As to quaternary structure, homodimer. It depends on Mg(2+) as a cofactor.

Its subcellular location is the cytoplasm. It catalyses the reaction N,N'-diacetylchitobiose + H2O = N-acetyl-beta-D-glucosaminyl-(1-&gt;4)-D-glucosamine + acetate. The catalysed reaction is diacetylchitobiose-6'-phosphate + H2O = N'-monoacetylchitobiose-6'-phosphate + acetate. It functions in the pathway glycan degradation; chitin degradation. Involved in the degradation of chitin. ChbG is essential for growth on the acetylated chitooligosaccharides chitobiose and chitotriose but is dispensable for growth on cellobiose and chitosan dimer, the deacetylated form of chitobiose. Deacetylation of chitobiose-6-P and chitotriose-6-P is necessary for both the activation of the chb promoter by the regulatory protein ChbR and the hydrolysis of phosphorylated beta-glucosides by the phospho-beta-glucosidase ChbF. Catalyzes the removal of only one acetyl group from chitobiose-6-P to yield monoacetylchitobiose-6-P, the inducer of ChbR and the substrate of ChbF. This chain is Chitooligosaccharide deacetylase, found in Klebsiella pneumoniae (strain 342).